Here is a 258-residue protein sequence, read N- to C-terminus: Imidazole glycerol phosphate synthase subunit HisF (258 aa).

Catalysis depends on residues D11 and D130.

Belongs to the HisA/HisF family. Heterodimer of HisH and HisF.

It localises to the cytoplasm. It catalyses the reaction 5-[(5-phospho-1-deoxy-D-ribulos-1-ylimino)methylamino]-1-(5-phospho-beta-D-ribosyl)imidazole-4-carboxamide + L-glutamine = D-erythro-1-(imidazol-4-yl)glycerol 3-phosphate + 5-amino-1-(5-phospho-beta-D-ribosyl)imidazole-4-carboxamide + L-glutamate + H(+). Its pathway is amino-acid biosynthesis; L-histidine biosynthesis; L-histidine from 5-phospho-alpha-D-ribose 1-diphosphate: step 5/9. In terms of biological role, IGPS catalyzes the conversion of PRFAR and glutamine to IGP, AICAR and glutamate. The HisF subunit catalyzes the cyclization activity that produces IGP and AICAR from PRFAR using the ammonia provided by the HisH subunit. This chain is Imidazole glycerol phosphate synthase subunit HisF, found in Escherichia fergusonii (strain ATCC 35469 / DSM 13698 / CCUG 18766 / IAM 14443 / JCM 21226 / LMG 7866 / NBRC 102419 / NCTC 12128 / CDC 0568-73).